Reading from the N-terminus, the 470-residue chain is Uronate isomerase (470 aa).

It belongs to the metallo-dependent hydrolases superfamily. Uronate isomerase family.

It carries out the reaction D-glucuronate = D-fructuronate. It catalyses the reaction aldehydo-D-galacturonate = keto-D-tagaturonate. The protein operates within carbohydrate metabolism; pentose and glucuronate interconversion. This Escherichia coli O157:H7 (strain EC4115 / EHEC) protein is Uronate isomerase.